A 103-amino-acid polypeptide reads, in one-letter code: Large ribosomal subunit protein bL21 (103 aa).

Belongs to the bacterial ribosomal protein bL21 family. In terms of assembly, part of the 50S ribosomal subunit. Contacts protein L20.

Its function is as follows. This protein binds to 23S rRNA in the presence of protein L20. This chain is Large ribosomal subunit protein bL21, found in Thiobacillus denitrificans (strain ATCC 25259 / T1).